Reading from the N-terminus, the 346-residue chain is DnaJ protein ERDJ3B (346 aa).

An N-terminal signal peptide occupies residues 1–23 (MAIRWSELCIVLFALSYAICVLA). One can recognise a J domain in the interval 26–91 (SYYDVLQVPK…EKREIYNKYG (66 aa)). An N-linked (GlcNAc...) asparagine glycan is attached at Asn-267.

As to quaternary structure, interacts with SDF2 and MED37A/BIP1. N-glycosylated. In terms of tissue distribution, expressed in leaves, flower buds and flowers.

It localises to the endoplasmic reticulum lumen. Regulates protein folding in the endoplasmic reticulum (ER) lumen. Forms a complex in the ER with SDF2 and MED37A/BIP1 which is required for the proper accumulation and function of the surface-exposed leucine-rich repeat receptor kinases EFR involved in pathogen-associated molecular pattern (PAMP) triggered immunity. The polypeptide is DnaJ protein ERDJ3B (ERDJ3B) (Arabidopsis thaliana (Mouse-ear cress)).